Consider the following 591-residue polypeptide: Cytidine monophosphate-N-acetylneuraminic acid hydroxylase (591 aa).

One can recognise a Rieske domain in the interval 16–114 (LASAEVESLK…IENDDENGVS (99 aa)). Cysteine 56, histidine 58, cysteine 77, and histidine 80 together coordinate [2Fe-2S] cluster.

This sequence belongs to the CMP-Neu5Ac hydroxylase family. The cofactor is [2Fe-2S] cluster.

The protein resides in the cytoplasm. It catalyses the reaction CMP-N-acetyl-beta-neuraminate + 2 Fe(II)-[cytochrome b5] + O2 + 2 H(+) = CMP-N-glycoloyl-beta-neuraminate + 2 Fe(III)-[cytochrome b5] + H2O. The protein operates within amino-sugar metabolism; N-acetylneuraminate metabolism. Sialic acids are components of carbohydrate chains of glycoconjugates and are involved in cell-cell recognition and cell-pathogen interactions. Catalyzes the conversion of CMP-N-acetylneuraminic acid (CMP-Neu5Ac) into its hydroxylated derivative CMP-N-glycolylneuraminic acid (CMP-Neu5Gc), a sialic acid abundantly expressed at the surface of many cells. The polypeptide is Cytidine monophosphate-N-acetylneuraminic acid hydroxylase (cmah) (Xenopus laevis (African clawed frog)).